A 184-amino-acid chain; its full sequence is ATP synthase subunit b, chloroplastic (184 aa).

A helical transmembrane segment spans residues 27 to 49 (LATNPINLSVVLGVLIFFGKGVL).

Belongs to the ATPase B chain family. In terms of assembly, F-type ATPases have 2 components, F(1) - the catalytic core - and F(0) - the membrane proton channel. F(1) has five subunits: alpha(3), beta(3), gamma(1), delta(1), epsilon(1). F(0) has four main subunits: a(1), b(1), b'(1) and c(10-14). The alpha and beta chains form an alternating ring which encloses part of the gamma chain. F(1) is attached to F(0) by a central stalk formed by the gamma and epsilon chains, while a peripheral stalk is formed by the delta, b and b' chains.

It localises to the plastid. Its subcellular location is the chloroplast thylakoid membrane. F(1)F(0) ATP synthase produces ATP from ADP in the presence of a proton or sodium gradient. F-type ATPases consist of two structural domains, F(1) containing the extramembraneous catalytic core and F(0) containing the membrane proton channel, linked together by a central stalk and a peripheral stalk. During catalysis, ATP synthesis in the catalytic domain of F(1) is coupled via a rotary mechanism of the central stalk subunits to proton translocation. Its function is as follows. Component of the F(0) channel, it forms part of the peripheral stalk, linking F(1) to F(0). In Pelargonium hortorum (Common geranium), this protein is ATP synthase subunit b, chloroplastic.